The following is a 161-amino-acid chain: Cytochrome c-type biogenesis protein CcmE (161 aa).

At 1 to 13 (MSWLPKSPKARRR) the chain is on the cytoplasmic side. The helical; Signal-anchor for type II membrane protein transmembrane segment at 14–34 (LMLVAAIAPVLAVAAGLTLWG) threads the bilayer. Residues 35–161 (LSDSISFFYT…QRPEHQGDAL (127 aa)) are Periplasmic-facing. Heme contacts are provided by His128 and Tyr132.

It belongs to the CcmE/CycJ family.

Its subcellular location is the cell inner membrane. Heme chaperone required for the biogenesis of c-type cytochromes. Transiently binds heme delivered by CcmC and transfers the heme to apo-cytochromes in a process facilitated by CcmF and CcmH. The sequence is that of Cytochrome c-type biogenesis protein CcmE from Phenylobacterium zucineum (strain HLK1).